We begin with the raw amino-acid sequence, 158 residues long: 6,7-dimethyl-8-ribityllumazine synthase (158 aa).

5-amino-6-(D-ribitylamino)uracil-binding positions include Phe-24, 58–60 (AFE), and 82–84 (AVI). 87–88 (GT) is a (2S)-2-hydroxy-3-oxobutyl phosphate binding site. His-90 serves as the catalytic Proton donor. 5-amino-6-(D-ribitylamino)uracil is bound at residue Phe-115. Arg-129 contacts (2S)-2-hydroxy-3-oxobutyl phosphate.

It belongs to the DMRL synthase family. In terms of assembly, forms an icosahedral capsid composed of 60 subunits, arranged as a dodecamer of pentamers.

It carries out the reaction (2S)-2-hydroxy-3-oxobutyl phosphate + 5-amino-6-(D-ribitylamino)uracil = 6,7-dimethyl-8-(1-D-ribityl)lumazine + phosphate + 2 H2O + H(+). The protein operates within cofactor biosynthesis; riboflavin biosynthesis; riboflavin from 2-hydroxy-3-oxobutyl phosphate and 5-amino-6-(D-ribitylamino)uracil: step 1/2. Its function is as follows. Catalyzes the formation of 6,7-dimethyl-8-ribityllumazine by condensation of 5-amino-6-(D-ribitylamino)uracil with 3,4-dihydroxy-2-butanone 4-phosphate. This is the penultimate step in the biosynthesis of riboflavin. In Ectopseudomonas mendocina (strain ymp) (Pseudomonas mendocina), this protein is 6,7-dimethyl-8-ribityllumazine synthase.